The chain runs to 448 residues: Argininosuccinate synthase (448 aa).

ATP contacts are provided by residues 17-25 (AFSGGLDTS) and Ala43. L-citrulline is bound at residue Tyr99. 2 residues coordinate ATP: Gly129 and Thr131. 3 residues coordinate L-aspartate: Thr131, Asn135, and Asp136. Asn135 provides a ligand contact to L-citrulline. Asp136 serves as a coordination point for ATP. The L-citrulline site is built by Arg139 and Ser192. Residue Asp194 coordinates ATP. 3 residues coordinate L-citrulline: Thr201, Glu203, and Glu280.

Belongs to the argininosuccinate synthase family. Type 2 subfamily. Homotetramer.

Its subcellular location is the cytoplasm. The catalysed reaction is L-citrulline + L-aspartate + ATP = 2-(N(omega)-L-arginino)succinate + AMP + diphosphate + H(+). The protein operates within amino-acid biosynthesis; L-arginine biosynthesis; L-arginine from L-ornithine and carbamoyl phosphate: step 2/3. The polypeptide is Argininosuccinate synthase (Acidovorax ebreus (strain TPSY) (Diaphorobacter sp. (strain TPSY))).